Here is a 291-residue protein sequence, read N- to C-terminus: UDP-N-acetylenolpyruvoylglucosamine reductase (291 aa).

The 168-residue stretch at 19–186 (GIGGPAEWIA…VSARLKLASG (168 aa)) folds into the FAD-binding PCMH-type domain. R165 is an active-site residue. Residue S215 is the Proton donor of the active site. The active site involves E285.

This sequence belongs to the MurB family. Requires FAD as cofactor.

The protein resides in the cytoplasm. The enzyme catalyses UDP-N-acetyl-alpha-D-muramate + NADP(+) = UDP-N-acetyl-3-O-(1-carboxyvinyl)-alpha-D-glucosamine + NADPH + H(+). The protein operates within cell wall biogenesis; peptidoglycan biosynthesis. Cell wall formation. The polypeptide is UDP-N-acetylenolpyruvoylglucosamine reductase (Prochlorococcus marinus (strain NATL2A)).